The chain runs to 1135 residues: Eukaryotic translation initiation factor 3 subunit A (1135 aa).

Positions 319-501 constitute a PCI domain; the sequence is LQRMAAHVLL…NSIYFGTDLT (183 aa). 2 stretches are compositionally biased toward basic and acidic residues: residues 588 to 623 and 829 to 899; these read QNNA…EERE and AAEE…RGGD. Disordered regions lie at residues 588–631 and 829–1135; these read QNNA…QNEI and AAEE…VKRR. Residue serine 908 is modified to Phosphoserine. Composition is skewed to basic and acidic residues over residues 920 to 971, 985 to 1045, 1053 to 1081, and 1104 to 1125; these read ERNE…EPDS, SRDD…EPQR, DAPR…RGDQ, and AREE…KAAD.

The protein belongs to the eIF-3 subunit A family. Component of the eukaryotic translation initiation factor 3 (eIF-3) complex. The eIF-3 complex interacts with pix.

It is found in the cytoplasm. In terms of biological role, RNA-binding component of the eukaryotic translation initiation factor 3 (eIF-3) complex, which is involved in protein synthesis of a specialized repertoire of mRNAs and, together with other initiation factors, stimulates binding of mRNA and methionyl-tRNAi to the 40S ribosome. The eIF-3 complex specifically targets and initiates translation of a subset of mRNAs involved in cell proliferation. The sequence is that of Eukaryotic translation initiation factor 3 subunit A from Drosophila erecta (Fruit fly).